Reading from the N-terminus, the 76-residue chain is Dermaseptin-H1 (76 aa).

The signal sequence occupies residues 1-22; that stretch reads MDILKKSLFIVLFLGLVSLSIC. Residues 23–45 constitute a propeptide that is removed on maturation; sequence EEEKRENEDEEEQEDDEQSEEKR. The disordered stretch occupies residues 25–44; that stretch reads EKRENEDEEEQEDDEQSEEK. Positions 30–41 are enriched in acidic residues; that stretch reads EDEEEQEDDEQS. A Glutamine amide modification is found at Q73. The propeptide occupies 75-76; sequence EQ.

As to expression, expressed by the skin glands.

Its subcellular location is the secreted. Functionally, has antimicrobial activity. In Pithecopus hypochondrialis (Orange-legged leaf frog), this protein is Dermaseptin-H1.